Reading from the N-terminus, the 218-residue chain is Small ribosomal subunit protein uS3c (218 aa).

Positions 43–118 (IKNYVQKNTR…KLNIAITRIG (76 aa)) constitute a KH type-2 domain.

The protein belongs to the universal ribosomal protein uS3 family. Part of the 30S ribosomal subunit.

It localises to the plastid. Its subcellular location is the chloroplast. This chain is Small ribosomal subunit protein uS3c (rps3), found in Gossypium barbadense (Sea Island cotton).